We begin with the raw amino-acid sequence, 24 residues long: Conotoxin PIVE (24 aa).

Intrachain disulfides connect Cys2-Cys10, Cys3-Cys15, and Cys13-Cys19. Lys24 carries the lysine amide modification.

Belongs to the conotoxin A superfamily. In terms of tissue distribution, expressed by the venom duct.

It localises to the secreted. Functionally, probable neurotoxin with ion channel inhibitor activity. In vivo, elicits dose-dependently excitatory activity upon injection into fish. Its action is slowly reversible. The protein is Conotoxin PIVE of Conus purpurascens (Purple cone).